We begin with the raw amino-acid sequence, 105 residues long: Small cysteine and glycine repeat-containing protein 6 (105 aa).

The interval 4–83 is 13 X 2 AA repeats of CG; it reads CGCGGCGGGC…HSCGCGCGCG (80 aa).

This sequence belongs to the KRTAP type 28 family.

Its function is as follows. In the hair cortex, hair keratin intermediate filaments are embedded in an interfilamentous matrix, consisting of hair keratin-associated proteins (KRTAP), which are essential for the formation of a rigid and resistant hair shaft through their extensive disulfide bond cross-linking with abundant cysteine residues of hair keratins. The matrix proteins include the high-sulfur and high-glycine-tyrosine keratins. The polypeptide is Small cysteine and glycine repeat-containing protein 6 (Homo sapiens (Human)).